The sequence spans 267 residues: MPKVTKIEVQKKNKERFNLFLDGEFEMGIDIDTLVKFNLKKDQILEPSDMQNIQEYDHYRRGVNLAIQYLSYKKRTEREVIQYLEKNDIQSNAIQDVIDYCYKEKFIDHEDYAESLKNTMIHTTDKGPEIYRQKLYQLGIEVTIIEKYVEAYEQQQPLDDVIKVAEKVMKSKKGPEAKVKQKVTQSLLQKGYKFETIQLVMNEIDFSQDEETLDHLLQRDLEKVYNKNCRKYDSDKSVIKTIEALMRKGYNYDKIKSKLEESGISNE.

The protein belongs to the RecX family.

It is found in the cytoplasm. Functionally, modulates RecA activity. This Staphylococcus epidermidis (strain ATCC 12228 / FDA PCI 1200) protein is Regulatory protein RecX.